Reading from the N-terminus, the 322-residue chain is Light-dependent protochlorophyllide reductase (322 aa).

This sequence belongs to the short-chain dehydrogenases/reductases (SDR) family. POR subfamily.

The enzyme catalyses chlorophyllide a + NADP(+) = protochlorophyllide a + NADPH + H(+). It participates in porphyrin-containing compound metabolism; chlorophyll biosynthesis. Functionally, phototransformation of protochlorophyllide (Pchlide) to chlorophyllide (Chlide). The chain is Light-dependent protochlorophyllide reductase (por) from Synechocystis sp. (strain ATCC 27184 / PCC 6803 / Kazusa).